The sequence spans 189 residues: Putative ankyrin repeat protein TV1425 (189 aa).

ANK repeat units follow at residues 31-60 (YNRTPLMVACMLGMENAIDKLVENFDKLED), 64-93 (EGSTALIWAVKNNRLGIAEKLLSKGSNVNT), 97-126 (SGKTPLMWSIIFGYSEMSYFLLEHGANVND), and 130-159 (EGETPLIVASKYGRSEIVKKLLELGADISA).

In Thermoplasma volcanium (strain ATCC 51530 / DSM 4299 / JCM 9571 / NBRC 15438 / GSS1), this protein is Putative ankyrin repeat protein TV1425.